The primary structure comprises 600 residues: Methylenetetrahydrofolate reductase 2 (600 aa).

Catalysis depends on Glu-22, which acts as the Proton donor/acceptor. NAD(+)-binding positions include 22 to 27 (EYFVPK) and 54 to 55 (TW). FAD-binding positions include 54-55 (TW), His-84, 114-116 (RGD), 133-134 (YA), Tyr-156, Asp-171, and Lys-178. Residue Asp-116 coordinates substrate. Gln-189 and Tyr-282 together coordinate substrate.

This sequence belongs to the methylenetetrahydrofolate reductase family. FAD serves as cofactor.

It catalyses the reaction (6S)-5-methyl-5,6,7,8-tetrahydrofolate + NADP(+) = (6R)-5,10-methylene-5,6,7,8-tetrahydrofolate + NADPH + H(+). It functions in the pathway one-carbon metabolism; tetrahydrofolate interconversion. This Saccharomyces cerevisiae (strain ATCC 204508 / S288c) (Baker's yeast) protein is Methylenetetrahydrofolate reductase 2 (MET13).